The sequence spans 108 residues: Immunoglobulin kappa variable 11-125 (108 aa).

The framework-1 stretch occupies residues 1 to 23 (DVQMIQSPSSLSASLGDIVTMTC). Cys23 and Cys88 are joined by a disulfide. Residues 24–34 (QASQGTSINLN) are complementarity-determining-1. The interval 35–49 (WFQQKPGKAPKLLIY) is framework-2. Residues 50–56 (GASILED) are complementarity-determining-2. The segment at 57 to 88 (GVPSRFSGSRYGTDFTLTISSLEDEDMATYFC) is framework-3. The tract at residues 89 to 97 (LQHSYLPYT) is complementarity-determining-3. The segment at 98 to 108 (FGGGTKLEIKR) is framework-4.

In Mus musculus (Mouse), this protein is Immunoglobulin kappa variable 11-125.